A 336-amino-acid polypeptide reads, in one-letter code: DNA repair protein RAD51 homolog A (336 aa).

The 30-residue stretch at 45–74 (TVEAVAYAPKKELLNIKGISEAKAEKILAE) folds into the HhH domain. 124–131 (GEFRTGKT) provides a ligand contact to ATP. Positions 242–257 (LARFLRMLLRLADEFG) match the Nuclear export signal motif.

It belongs to the RecA family. RAD51 subfamily. In terms of assembly, forms linear homooligomers, giving rise to a RAD51 nucleoprotein filament, which is essential for strand-pairing reactions during DNA recombination.

The protein resides in the nucleus. Its subcellular location is the cytoplasm. It localises to the chromosome. In terms of biological role, plays an important role in homologous strand exchange, a key step in DNA repair through homologous recombination (HR). Binds to single-stranded DNA in an ATP-dependent manner to form nucleoprotein filaments which are essential for the homology search and strand exchange. Catalyzes the recognition of homology and strand exchange between homologous DNA partners to form a joint molecule between a processed DNA break and the repair template. Recruited to resolve stalled replication forks during replication stress. Also involved in interstrand cross-link repair. In Xenopus laevis (African clawed frog), this protein is DNA repair protein RAD51 homolog A (rad51-a).